The primary structure comprises 87 residues: Kappa-6-bungarotoxin (87 aa).

An N-terminal signal peptide occupies residues 1 to 21; sequence MKTLLLSLVVVTIVCLDLGYT. Cystine bridges form between C24/C42, C35/C63, C48/C52, C67/C79, and C80/C85.

Belongs to the three-finger toxin family. Long-chain subfamily. Kappa-neurotoxin sub-subfamily. Homo- and heterodimer; non-covalently linked. Expressed by the venom gland.

Its subcellular location is the secreted. Postsynaptic neurotoxin that binds and inhibits neuronal nicotinic acetylcholine receptors (nAChR) with high affinity (IC(50)&lt;100 nM). Is a selective, and slowly reversible antagonist of alpha-3/CHRNA3-containing and some alpha-4/CHRNA4-containing AChRs. This is Kappa-6-bungarotoxin from Bungarus multicinctus (Many-banded krait).